A 163-amino-acid chain; its full sequence is SKP1-like protein 4 (163 aa).

The interval Ile-105–Glu-163 is interaction with the F-box domain of F-box proteins.

Belongs to the SKP1 family. Part of a SCF (SKP1-cullin-F-box) protein ligase complex. Interacts with At1g56610, At1g67340, At3g62230, At3g59000, At4g27050, At1g55000, SKIP16 and SKIP32. As to expression, mostly expressed in inflorescence and siliques, and, to a lower extent, in seedlings, roots, and stems.

It is found in the nucleus. Its pathway is protein modification; protein ubiquitination. Its function is as follows. Involved in ubiquitination and subsequent proteasomal degradation of target proteins. Together with CUL1, RBX1 and a F-box protein, it forms a SCF E3 ubiquitin ligase complex. The functional specificity of this complex depends on the type of F-box protein. In the SCF complex, it serves as an adapter that links the F-box protein to CUL1. The polypeptide is SKP1-like protein 4 (ASK4) (Arabidopsis thaliana (Mouse-ear cress)).